The primary structure comprises 227 residues: PKHD-type hydroxylase M446_1130 (227 aa).

A Fe2OG dioxygenase domain is found at 78–178 (QIFPPLFNRY…RVASFFWLQS (101 aa)). 3 residues coordinate Fe cation: His-96, Asp-98, and His-159. Arg-169 provides a ligand contact to 2-oxoglutarate.

The cofactor is Fe(2+). L-ascorbate is required as a cofactor.

This Methylobacterium sp. (strain 4-46) protein is PKHD-type hydroxylase M446_1130.